The primary structure comprises 348 residues: Heat-inducible transcription repressor HrcA (348 aa).

It belongs to the HrcA family.

In terms of biological role, negative regulator of class I heat shock genes (grpE-dnaK-dnaJ and groELS operons). Prevents heat-shock induction of these operons. This Lacticaseibacillus casei (strain BL23) (Lactobacillus casei) protein is Heat-inducible transcription repressor HrcA.